A 104-amino-acid polypeptide reads, in one-letter code: Large ribosomal subunit protein bL21 (104 aa).

Belongs to the bacterial ribosomal protein bL21 family. Part of the 50S ribosomal subunit. Contacts protein L20.

Functionally, this protein binds to 23S rRNA in the presence of protein L20. This is Large ribosomal subunit protein bL21 from Helicobacter pylori (strain P12).